A 273-amino-acid polypeptide reads, in one-letter code: Dermonecrotic toxin LvSicTox-alphaIC1ai (273 aa).

The active site involves histidine 5. Glutamate 25 and aspartate 27 together coordinate Mg(2+). The Nucleophile role is filled by histidine 41. Cystine bridges form between cysteine 45-cysteine 51 and cysteine 47-cysteine 190. Aspartate 85 is a Mg(2+) binding site.

This sequence belongs to the arthropod phospholipase D family. Class II subfamily. It depends on Mg(2+) as a cofactor. Expressed by the venom gland.

The protein localises to the secreted. It carries out the reaction an N-(acyl)-sphingosylphosphocholine = an N-(acyl)-sphingosyl-1,3-cyclic phosphate + choline. It catalyses the reaction an N-(acyl)-sphingosylphosphoethanolamine = an N-(acyl)-sphingosyl-1,3-cyclic phosphate + ethanolamine. The catalysed reaction is a 1-acyl-sn-glycero-3-phosphocholine = a 1-acyl-sn-glycero-2,3-cyclic phosphate + choline. The enzyme catalyses a 1-acyl-sn-glycero-3-phosphoethanolamine = a 1-acyl-sn-glycero-2,3-cyclic phosphate + ethanolamine. Functionally, dermonecrotic toxins cleave the phosphodiester linkage between the phosphate and headgroup of certain phospholipids (sphingolipid and lysolipid substrates), forming an alcohol (often choline) and a cyclic phosphate. This toxin acts on sphingomyelin (SM). It may also act on ceramide phosphoethanolamine (CPE), lysophosphatidylcholine (LPC) and lysophosphatidylethanolamine (LPE), but not on lysophosphatidylserine (LPS), and lysophosphatidylglycerol (LPG). It acts by transphosphatidylation, releasing exclusively cyclic phosphate products as second products. Induces dermonecrosis, hemolysis, increased vascular permeability, edema, inflammatory response, and platelet aggregation. The sequence is that of Dermonecrotic toxin LvSicTox-alphaIC1ai from Loxosceles variegata (Recluse spider).